The sequence spans 863 residues: Protein translocase subunit SecA (863 aa).

Residues Gln88, 106 to 110 (GEGKT), and Asp507 contribute to the ATP site. A disordered region spans residues 806–863 (KSHEQNEQFLSNTTESGVNENGEAQITKVPRNSPCPCGSGKKYKECHGKSGPKKGILA). The segment covering 812–829 (EQFLSNTTESGVNENGEA) has biased composition (polar residues). 4 residues coordinate Zn(2+): Cys840, Cys842, Cys851, and His852.

The protein belongs to the SecA family. As to quaternary structure, monomer and homodimer. Part of the essential Sec protein translocation apparatus which comprises SecA, SecYEG and auxiliary proteins SecDF-YajC and YidC. Zn(2+) serves as cofactor.

Its subcellular location is the cell inner membrane. It is found in the cytoplasm. It carries out the reaction ATP + H2O + cellular proteinSide 1 = ADP + phosphate + cellular proteinSide 2.. Part of the Sec protein translocase complex. Interacts with the SecYEG preprotein conducting channel. Has a central role in coupling the hydrolysis of ATP to the transfer of proteins into and across the cell membrane, serving as an ATP-driven molecular motor driving the stepwise translocation of polypeptide chains across the membrane. This Campylobacter lari (strain RM2100 / D67 / ATCC BAA-1060) protein is Protein translocase subunit SecA.